A 213-amino-acid polypeptide reads, in one-letter code: GTP-binding protein YPTC4 (213 aa).

13–21 (GDTGVGKSC) serves as a coordination point for GTP. Residues 35 to 43 (HDLTIGVEF) carry the Effector region motif. GTP contacts are provided by residues 61-65 (DTAGQ), 119-122 (NKCD), and 149-151 (SAR). Positions 194–213 (AGPQTVKPGEGGAAKSSSCC) are disordered. S-geranylgeranyl cysteine attachment occurs at residues Cys212 and Cys213.

Belongs to the small GTPase superfamily. Rab family.

The protein localises to the cell membrane. Its function is as follows. Protein transport. Probably involved in vesicular traffic. In Chlamydomonas reinhardtii (Chlamydomonas smithii), this protein is GTP-binding protein YPTC4 (YPTC4).